Reading from the N-terminus, the 188-residue chain is Elongation factor P (188 aa).

It belongs to the elongation factor P family.

It is found in the cytoplasm. Its pathway is protein biosynthesis; polypeptide chain elongation. Its function is as follows. Involved in peptide bond synthesis. Stimulates efficient translation and peptide-bond synthesis on native or reconstituted 70S ribosomes in vitro. Probably functions indirectly by altering the affinity of the ribosome for aminoacyl-tRNA, thus increasing their reactivity as acceptors for peptidyl transferase. The sequence is that of Elongation factor P from Stutzerimonas stutzeri (strain A1501) (Pseudomonas stutzeri).